A 349-amino-acid chain; its full sequence is tRNA-specific 2-thiouridylase MnmA (349 aa).

Residues 7-14 (GLSGGVDS) and Leu-33 each bind ATP. The active-site Nucleophile is the Cys-94. A disulfide bridge connects residues Cys-94 and Cys-193. Residue Gly-119 coordinates ATP. Residues 143-145 (KDQ) are interaction with tRNA. The active-site Cysteine persulfide intermediate is Cys-193. The interval 298-299 (RY) is interaction with tRNA.

It belongs to the MnmA/TRMU family.

It is found in the cytoplasm. It catalyses the reaction S-sulfanyl-L-cysteinyl-[protein] + uridine(34) in tRNA + AH2 + ATP = 2-thiouridine(34) in tRNA + L-cysteinyl-[protein] + A + AMP + diphosphate + H(+). Its function is as follows. Catalyzes the 2-thiolation of uridine at the wobble position (U34) of tRNA, leading to the formation of s(2)U34. The chain is tRNA-specific 2-thiouridylase MnmA from Gloeothece citriformis (strain PCC 7424) (Cyanothece sp. (strain PCC 7424)).